A 166-amino-acid chain; its full sequence is Large ribosomal subunit protein uL10 (166 aa).

This sequence belongs to the universal ribosomal protein uL10 family. In terms of assembly, part of the ribosomal stalk of the 50S ribosomal subunit. The N-terminus interacts with L11 and the large rRNA to form the base of the stalk. The C-terminus forms an elongated spine to which L12 dimers bind in a sequential fashion forming a multimeric L10(L12)X complex.

In terms of biological role, forms part of the ribosomal stalk, playing a central role in the interaction of the ribosome with GTP-bound translation factors. This chain is Large ribosomal subunit protein uL10, found in Staphylococcus haemolyticus (strain JCSC1435).